The primary structure comprises 312 residues: Glyoxylate/hydroxypyruvate reductase A (312 aa).

The active site involves arginine 227. The active-site Proton donor is the histidine 275.

It belongs to the D-isomer specific 2-hydroxyacid dehydrogenase family. GhrA subfamily.

It localises to the cytoplasm. It carries out the reaction glycolate + NADP(+) = glyoxylate + NADPH + H(+). It catalyses the reaction (R)-glycerate + NAD(+) = 3-hydroxypyruvate + NADH + H(+). The catalysed reaction is (R)-glycerate + NADP(+) = 3-hydroxypyruvate + NADPH + H(+). Functionally, catalyzes the NADPH-dependent reduction of glyoxylate and hydroxypyruvate into glycolate and glycerate, respectively. This is Glyoxylate/hydroxypyruvate reductase A from Escherichia coli O17:K52:H18 (strain UMN026 / ExPEC).